The chain runs to 293 residues: MAWIQLRIHTHRDNADLLGDLLMDQGSLSITYEDGQDEPIFEPKLGETPLWQDTVMIALFDAGTDLAPTIEFLESMPFLGKGFNHKIEQVEDKDWIREWMDSFHPIQFGSRLWICPSWREIPDPTAVNVILDPGLAFGTGTHPTTALCLEWLDSLDLSNQEVIDFGCGSGILAIAAIKLGAKKVTGVDIDYQAIDASKANAERNDVVDKLALYLPEDQPANLQADVLVANILAGPLKELAPLIAEKVKIGGKLALSGLLQEQAQEVSDFYSQWFIMDPVSNKEDWSRLTGIRK.

Residues threonine 145, glycine 166, aspartate 188, and asparagine 230 each contribute to the S-adenosyl-L-methionine site.

Belongs to the methyltransferase superfamily. PrmA family.

The protein resides in the cytoplasm. The catalysed reaction is L-lysyl-[protein] + 3 S-adenosyl-L-methionine = N(6),N(6),N(6)-trimethyl-L-lysyl-[protein] + 3 S-adenosyl-L-homocysteine + 3 H(+). Its function is as follows. Methylates ribosomal protein L11. The polypeptide is Ribosomal protein L11 methyltransferase (Shewanella frigidimarina (strain NCIMB 400)).